The sequence spans 191 residues: Pyridoxal 5'-phosphate synthase subunit PdxT (191 aa).

Position 46 to 48 (46 to 48 (GES)) interacts with L-glutamine. The Nucleophile role is filled by C75. Residues R101 and 129–130 (IR) contribute to the L-glutamine site. Active-site charge relay system residues include H165 and E167.

The protein belongs to the glutaminase PdxT/SNO family. In terms of assembly, in the presence of PdxS, forms a dodecamer of heterodimers. Only shows activity in the heterodimer.

The catalysed reaction is aldehydo-D-ribose 5-phosphate + D-glyceraldehyde 3-phosphate + L-glutamine = pyridoxal 5'-phosphate + L-glutamate + phosphate + 3 H2O + H(+). It catalyses the reaction L-glutamine + H2O = L-glutamate + NH4(+). It participates in cofactor biosynthesis; pyridoxal 5'-phosphate biosynthesis. Catalyzes the hydrolysis of glutamine to glutamate and ammonia as part of the biosynthesis of pyridoxal 5'-phosphate. The resulting ammonia molecule is channeled to the active site of PdxS. The protein is Pyridoxal 5'-phosphate synthase subunit PdxT of Staphylococcus saprophyticus subsp. saprophyticus (strain ATCC 15305 / DSM 20229 / NCIMB 8711 / NCTC 7292 / S-41).